The chain runs to 341 residues: tRNA uridine(34) hydroxylase (341 aa).

The 95-residue stretch at 139 to 233 folds into the Rhodanese domain; the sequence is SDPEVVLVDT…YLEEVPSTET (95 aa). Residue Cys193 is the Cysteine persulfide intermediate of the active site. 2 stretches are compositionally biased toward basic and acidic residues: residues 306-316 and 324-341; these read SLAEERGESHI and IEERRQEKNDKKAKQANK. The segment at 306-341 is disordered; sequence SLAEERGESHIGGDIQNIIEERRQEKNDKKAKQANK.

It belongs to the TrhO family.

The catalysed reaction is uridine(34) in tRNA + AH2 + O2 = 5-hydroxyuridine(34) in tRNA + A + H2O. Catalyzes oxygen-dependent 5-hydroxyuridine (ho5U) modification at position 34 in tRNAs. The polypeptide is tRNA uridine(34) hydroxylase (Colwellia psychrerythraea (strain 34H / ATCC BAA-681) (Vibrio psychroerythus)).